A 207-amino-acid chain; its full sequence is Cytochrome c biogenesis ATP-binding export protein CcmA (207 aa).

Residues 4-207 (LEARELLCER…RISLTQTRAA (204 aa)) form the ABC transporter domain. 36 to 43 (GSNGAGKT) is a binding site for ATP.

This sequence belongs to the ABC transporter superfamily. CcmA exporter (TC 3.A.1.107) family. As to quaternary structure, the complex is composed of two ATP-binding proteins (CcmA) and two transmembrane proteins (CcmB).

The protein resides in the cell inner membrane. The enzyme catalyses heme b(in) + ATP + H2O = heme b(out) + ADP + phosphate + H(+). In terms of biological role, part of the ABC transporter complex CcmAB involved in the biogenesis of c-type cytochromes; once thought to export heme, this seems not to be the case, but its exact role is uncertain. Responsible for energy coupling to the transport system. The polypeptide is Cytochrome c biogenesis ATP-binding export protein CcmA (Shigella sonnei (strain Ss046)).